An 843-amino-acid polypeptide reads, in one-letter code: Glycogen phosphorylase, muscle form (843 aa).

N-acetylserine is present on S2. S15 is subject to Phosphoserine; by PHK; in form phosphorylase A. AMP is bound by residues D43 and Y76. Phosphotyrosine is present on residues Y204 and Y227. 310 to 319 (RRFKSSKFGC) contacts AMP. Residue S430 is modified to Phosphoserine. At Y473 the chain carries Phosphotyrosine. S514 carries the post-translational modification Phosphoserine. At K681 the chain carries N6-(pyridoxal phosphate)lysine. A phosphoserine mark is found at S747 and S748.

It belongs to the glycogen phosphorylase family. Homodimer. Homotetramer; to form the enzymatically active phosphorylase A. Requires pyridoxal 5'-phosphate as cofactor. Post-translationally, phosphorylation of Ser-15 converts phosphorylase B (unphosphorylated) to phosphorylase A.

It carries out the reaction [(1-&gt;4)-alpha-D-glucosyl](n) + phosphate = [(1-&gt;4)-alpha-D-glucosyl](n-1) + alpha-D-glucose 1-phosphate. Allosterically regulated through the non-covalent binding of metabolites, being activated by AMP and inhibited by ATP, ADP, and glucose-6-phosphate. The activity is also controlled by post-translational modifications including phosphorylation. Functionally, allosteric enzyme that catalyzes the rate-limiting step in glycogen catabolism, the phosphorolytic cleavage of glycogen to produce glucose-1-phosphate, and plays a central role in maintaining cellular and organismal glucose homeostasis. The sequence is that of Glycogen phosphorylase, muscle form from Oryctolagus cuniculus (Rabbit).